A 438-amino-acid chain; its full sequence is Exodeoxyribonuclease 7 large subunit (438 aa).

The interval 406–438 is disordered; sequence ATSTGPTDDIPSSAARLPASPAPDARPASGPES.

This sequence belongs to the XseA family. In terms of assembly, heterooligomer composed of large and small subunits.

The protein resides in the cytoplasm. The enzyme catalyses Exonucleolytic cleavage in either 5'- to 3'- or 3'- to 5'-direction to yield nucleoside 5'-phosphates.. Functionally, bidirectionally degrades single-stranded DNA into large acid-insoluble oligonucleotides, which are then degraded further into small acid-soluble oligonucleotides. This chain is Exodeoxyribonuclease 7 large subunit, found in Clavibacter sepedonicus (Clavibacter michiganensis subsp. sepedonicus).